Here is a 236-residue protein sequence, read N- to C-terminus: Large ribosomal subunit protein uL1 (236 aa).

This sequence belongs to the universal ribosomal protein uL1 family. Part of the 50S ribosomal subunit.

Its function is as follows. Binds directly to 23S rRNA. The L1 stalk is quite mobile in the ribosome, and is involved in E site tRNA release. Functionally, protein L1 is also a translational repressor protein, it controls the translation of the L11 operon by binding to its mRNA. The sequence is that of Large ribosomal subunit protein uL1 from Corynebacterium glutamicum (strain R).